The sequence spans 393 residues: Putative competence-damage inducible protein (393 aa).

Belongs to the CinA family.

This is Putative competence-damage inducible protein from Streptococcus suis (strain 98HAH33).